The primary structure comprises 92 residues: Small ribosomal subunit protein uS19c (92 aa).

This sequence belongs to the universal ribosomal protein uS19 family.

It localises to the plastid. The protein resides in the chloroplast. Functionally, protein S19 forms a complex with S13 that binds strongly to the 16S ribosomal RNA. The polypeptide is Small ribosomal subunit protein uS19c (rps19) (Pisum sativum (Garden pea)).